We begin with the raw amino-acid sequence, 224 residues long: MGLLETNQYLHSQLEKSKQDFRDLTEKLLTSQATVYSLAKQLQKYKCEEYKDLIESVLEEEAPFEEGNLAEKRRLATGLGRYDSLIEAQARELTCLRQKIQEGEGVCHLFTQHAKNTIKTFESFIKTTDMTYYQRQRFCELLAQGSQMAERLASKLSTENHHDRKDEEGQESLAARLSMGLQGEEVNEVLEDSLDEKYLTHSSHHDSHRPPSSIASVCDVQDQL.

The Olduvai domain occupies 159-224 (ENHHDRKDEE…ASVCDVQDQL (66 aa)). Basic and acidic residues predominate over residues 198-209 (YLTHSSHHDSHR). Positions 198–224 (YLTHSSHHDSHRPPSSIASVCDVQDQL) are disordered.

This sequence belongs to the NBPF family.

The chain is NBPF family member NBPF6-like protein from Bos taurus (Bovine).